The sequence spans 458 residues: UDP-N-acetylmuramate--L-alanine ligase (458 aa).

ATP is bound at residue 118–124 (GTHGKTT).

Belongs to the MurCDEF family.

The protein localises to the cytoplasm. The enzyme catalyses UDP-N-acetyl-alpha-D-muramate + L-alanine + ATP = UDP-N-acetyl-alpha-D-muramoyl-L-alanine + ADP + phosphate + H(+). It functions in the pathway cell wall biogenesis; peptidoglycan biosynthesis. Its function is as follows. Cell wall formation. The polypeptide is UDP-N-acetylmuramate--L-alanine ligase (Clostridium novyi (strain NT)).